Consider the following 633-residue polypeptide: DNA mismatch repair protein MutL (633 aa).

Disordered regions lie at residues 336-364 (VRPD…GEFG) and 384-405 (GWSG…TRPE). Residues 388-401 (GASSSGASSGYSAY) are compositionally biased toward low complexity.

This sequence belongs to the DNA mismatch repair MutL/HexB family.

In terms of biological role, this protein is involved in the repair of mismatches in DNA. It is required for dam-dependent methyl-directed DNA mismatch repair. May act as a 'molecular matchmaker', a protein that promotes the formation of a stable complex between two or more DNA-binding proteins in an ATP-dependent manner without itself being part of a final effector complex. In Pseudomonas paraeruginosa (strain DSM 24068 / PA7) (Pseudomonas aeruginosa (strain PA7)), this protein is DNA mismatch repair protein MutL.